We begin with the raw amino-acid sequence, 295 residues long: Cytidine deaminase (295 aa).

CMP/dCMP-type deaminase domains lie at E48–A168 and D187–L295. N89–E91 contacts substrate. H102 is a Zn(2+) binding site. Residue E104 is the Proton donor of the active site. Residues C129 and C132 each contribute to the Zn(2+) site.

The protein belongs to the cytidine and deoxycytidylate deaminase family. Homodimer. Zn(2+) is required as a cofactor.

It carries out the reaction cytidine + H2O + H(+) = uridine + NH4(+). It catalyses the reaction 2'-deoxycytidine + H2O + H(+) = 2'-deoxyuridine + NH4(+). Functionally, this enzyme scavenges exogenous and endogenous cytidine and 2'-deoxycytidine for UMP synthesis. The sequence is that of Cytidine deaminase from Vibrio cholerae serotype O1 (strain ATCC 39541 / Classical Ogawa 395 / O395).